Reading from the N-terminus, the 140-residue chain is Large ribosomal subunit protein bL17 (140 aa).

The protein belongs to the bacterial ribosomal protein bL17 family. As to quaternary structure, part of the 50S ribosomal subunit. Contacts protein L32.

The protein is Large ribosomal subunit protein bL17 of Rhizobium rhizogenes (strain K84 / ATCC BAA-868) (Agrobacterium radiobacter).